The chain runs to 418 residues: cAMP-dependent protein kinase type II-beta regulatory subunit (418 aa).

Positions 2–153 (SIEIPAGLTE…RLQEACKDIL (152 aa)) are dimerization and phosphorylation. Residues 45–57 (RKGTARFGHEGRT) show a composition bias toward basic and acidic residues. Residues 45–98 (RKGTARFGHEGRTWGDAGAAGGGGTPSKGVNFAEEPRHSDSENGEEEEEEAADA) form a disordered region. A Phosphothreonine modification is found at T69. Phosphoserine is present on residues S83 and S85. A compositionally biased stretch (acidic residues) spans 86–96 (ENGEEEEEEAA). At S114 the chain carries Phosphoserine. 3',5'-cyclic AMP-binding positions include 154-275 (LFKN…ESLP), E223, R232, 276-418 (FLKS…EPTA), E352, and R361.

This sequence belongs to the cAMP-dependent kinase regulatory chain family. In terms of assembly, the inactive form of the enzyme is composed of two regulatory chains and two catalytic chains. Activation by cAMP produces two active catalytic monomers and a regulatory dimer that binds four cAMP molecules. Interacts with PRKACA and PRKACB. Interacts with the phosphorylated form of PJA2. Forms a complex composed of PRKAR2B, GSK3B and GSKIP through GSKIP interaction; facilitates PKA-induced phosphorylation and regulates GSK3B activity. Phosphorylated by the activated catalytic chain. As to expression, four types of regulatory chains are found: I-alpha, I-beta, II-alpha, and II-beta. Their expression varies among tissues and is in some cases constitutive and in others inducible.

It localises to the cytoplasm. The protein localises to the cell membrane. In terms of biological role, regulatory subunit of the cAMP-dependent protein kinases involved in cAMP signaling in cells. Type II regulatory chains mediate membrane association by binding to anchoring proteins, including the MAP2 kinase. This chain is cAMP-dependent protein kinase type II-beta regulatory subunit (PRKAR2B), found in Bos taurus (Bovine).